Reading from the N-terminus, the 102-residue chain is Co-chaperonin GroES (102 aa).

Belongs to the GroES chaperonin family. Heptamer of 7 subunits arranged in a ring. Interacts with the chaperonin GroEL.

Its subcellular location is the cytoplasm. Functionally, together with the chaperonin GroEL, plays an essential role in assisting protein folding. The GroEL-GroES system forms a nano-cage that allows encapsulation of the non-native substrate proteins and provides a physical environment optimized to promote and accelerate protein folding. GroES binds to the apical surface of the GroEL ring, thereby capping the opening of the GroEL channel. The chain is Co-chaperonin GroES from Vibrio harveyi (Beneckea harveyi).